Consider the following 117-residue polypeptide: Large ribosomal subunit protein bL19 (117 aa).

It belongs to the bacterial ribosomal protein bL19 family.

This protein is located at the 30S-50S ribosomal subunit interface and may play a role in the structure and function of the aminoacyl-tRNA binding site. The protein is Large ribosomal subunit protein bL19 of Shewanella halifaxensis (strain HAW-EB4).